The sequence spans 152 residues: Ribosome maturation factor RimP (152 aa).

Belongs to the RimP family.

It is found in the cytoplasm. Functionally, required for maturation of 30S ribosomal subunits. This is Ribosome maturation factor RimP from Alkaliphilus metalliredigens (strain QYMF).